The following is a 291-amino-acid chain: Gamma-sarcoglycan (291 aa).

Residues 38 to 58 traverse the membrane as a helical; Signal-anchor for type II membrane protein segment; the sequence is LFVLLLLIVLLVNFALTIWIL. Residues 59–291 are Extracellular-facing; sequence RVMWFSPVGM…TCHEHSHLCL (233 aa). Asn110 carries N-linked (GlcNAc...) asparagine glycosylation. 2 cysteine pairs are disulfide-bonded: Cys265–Cys290 and Cys267–Cys283.

It belongs to the sarcoglycan beta/delta/gamma/zeta family. In terms of assembly, interacts with the syntrophin SNTA1. Cross-link to form 2 major subcomplexes: one consisting of SGCB, SGCD and SGCG and the other consisting of SGCB and SGCD. The association between SGCB and SGCG is particularly strong while SGCA is loosely associated with the other sarcoglycans. Interacts with FLNC. In terms of processing, disulfide bonds are present.

Its subcellular location is the cell membrane. It localises to the sarcolemma. The protein localises to the cytoplasm. It is found in the cytoskeleton. Component of the sarcoglycan complex, a subcomplex of the dystrophin-glycoprotein complex which forms a link between the F-actin cytoskeleton and the extracellular matrix. The chain is Gamma-sarcoglycan (SGCG) from Bos taurus (Bovine).